Consider the following 294-residue polypeptide: Cyclin-dependent kinase A-1 (294 aa).

Positions 4–287 (YEKVEKIGEG…ARAALEHEYF (284 aa)) constitute a Protein kinase domain. ATP is bound by residues 10–18 (IGEGTYGVV) and lysine 33. Position 15 is a phosphotyrosine (tyrosine 15). The Proton acceptor role is filled by aspartate 127. At threonine 161 the chain carries Phosphothreonine.

It belongs to the protein kinase superfamily. CMGC Ser/Thr protein kinase family. CDC2/CDKX subfamily. In terms of assembly, interacts with CDT1A, CYCA2-3, CYCD2-1, CYCD3-1, CYCD4-1, CYCD4-2, CYCH1-1, CYCU1-1, CYCU2-1, CYCU2-2, CYCU3-1, CYCU4-1, CYCU4-2, CYCU4-3, CKS1, KRP2/ICK2, KRP3/ICK6, KRP4/ICK7, KRP6/ICK4, KRP7/ICK5, and C-terminal domain of KRP1/ICK1. Interacts with WEE1 and TIF4A-1/EIF4A-1. Interacts with PAS2; when phosphorylated at Tyr-15. Interacts with SMR3, SMR4, SMR5, SMR6, SMR8 and At4g14310. Binds to CYCD3-2. Component of a DREAM-like complex which modulates a variety of developmentally regulated genes and of the mitotic genes in proliferating and differentiated cells. Interacts with MYB3R3 at later and with MYB3R4 at earlier stages of leaf development. May interact with SPCH. In terms of processing, phosphorylated at Tyr-15 by WEE1. Phosphorylation at Thr-161 is important for the kinase activity and substrate binding. Binding to the anti-phosphatase PAS2 prevents dephosphorylation. Expressed in roots, stems, flowers and siliques.

The protein resides in the cytoplasm. It is found in the nucleus. It carries out the reaction L-seryl-[protein] + ATP = O-phospho-L-seryl-[protein] + ADP + H(+). The catalysed reaction is L-threonyl-[protein] + ATP = O-phospho-L-threonyl-[protein] + ADP + H(+). The enzyme catalyses [DNA-directed RNA polymerase] + ATP = phospho-[DNA-directed RNA polymerase] + ADP + H(+). Its activity is regulated as follows. CDK kinase activated by CDKF-1. CDK kinase activity inhibited by KRP1/ICK1, KRP2/ICK2, KRP3/ICK6, KRP4/ICK7, KRP5/ICK3, KRP6/ICK4 and KRP7/ICK5. Down-regulated by phosphorylation by WEE1. Functionally, involved in the control of the cell cycle. Essential for both G1/S and G2/M (mitosis) phase transitions. Functions in cell morphogenesis as well as cell proliferation. Required for cell division (entry into mitosis) of the generative cell in male gametogenesis. Required to trigger guard mother cells (GMC) symmetric divisions at the late stage of stomatal development, probably via the regulation of G1 to S transition in the cell cycle. Required for the function of SPCH in entering the stomatal lineage. Promotes divisions in the guard cells (GCs) after the guard mother cells (GMC) symmetric division when in the presence of CYCD3-2 via the phosphorylation of SPCH. This is Cyclin-dependent kinase A-1 from Arabidopsis thaliana (Mouse-ear cress).